Consider the following 162-residue polypeptide: Shikimate kinase (162 aa).

11–16 contributes to the ATP binding site; that stretch reads GSGKSS. Position 15 (S15) interacts with Mg(2+). D33, R57, and G80 together coordinate substrate. ATP is bound at residue R116. A substrate-binding site is contributed by R132.

The protein belongs to the shikimate kinase family. Monomer. The cofactor is Mg(2+).

It localises to the cytoplasm. It carries out the reaction shikimate + ATP = 3-phosphoshikimate + ADP + H(+). It participates in metabolic intermediate biosynthesis; chorismate biosynthesis; chorismate from D-erythrose 4-phosphate and phosphoenolpyruvate: step 5/7. Catalyzes the specific phosphorylation of the 3-hydroxyl group of shikimic acid using ATP as a cosubstrate. This chain is Shikimate kinase, found in Helicobacter pylori (strain G27).